The chain runs to 514 residues: ATP synthase subunit alpha (514 aa).

170–177 (GDRQTGKT) contacts ATP.

This sequence belongs to the ATPase alpha/beta chains family. F-type ATPases have 2 components, CF(1) - the catalytic core - and CF(0) - the membrane proton channel. CF(1) has five subunits: alpha(3), beta(3), gamma(1), delta(1), epsilon(1). CF(0) has three main subunits: a(1), b(2) and c(9-12). The alpha and beta chains form an alternating ring which encloses part of the gamma chain. CF(1) is attached to CF(0) by a central stalk formed by the gamma and epsilon chains, while a peripheral stalk is formed by the delta and b chains.

It is found in the cell inner membrane. The enzyme catalyses ATP + H2O + 4 H(+)(in) = ADP + phosphate + 5 H(+)(out). Its function is as follows. Produces ATP from ADP in the presence of a proton gradient across the membrane. The alpha chain is a regulatory subunit. The sequence is that of ATP synthase subunit alpha from Acinetobacter baumannii (strain AB307-0294).